Reading from the N-terminus, the 726-residue chain is Catalase-peroxidase (726 aa).

Residues 93–216 constitute a cross-link (tryptophyl-tyrosyl-methioninium (Trp-Tyr) (with M-242)); that stretch reads WHSAGTYRVH…LAAVQMGLIY (124 aa). The active-site Proton acceptor is H94. The tryptophyl-tyrosyl-methioninium (Tyr-Met) (with W-93) cross-link spans 216–242; it reads YVNPEGPNGNPDPVAAAVDIRETFTRM. H257 is a binding site for heme b. Residues 471–490 form a disordered region; sequence GSDKRGGANGARIRLSPQKD.

Belongs to the peroxidase family. Peroxidase/catalase subfamily. In terms of assembly, homodimer or homotetramer. It depends on heme b as a cofactor. In terms of processing, formation of the three residue Trp-Tyr-Met cross-link is important for the catalase, but not the peroxidase activity of the enzyme.

The enzyme catalyses H2O2 + AH2 = A + 2 H2O. It carries out the reaction 2 H2O2 = O2 + 2 H2O. Bifunctional enzyme with both catalase and broad-spectrum peroxidase activity. This is Catalase-peroxidase from Methylacidiphilum infernorum (isolate V4) (Methylokorus infernorum (strain V4)).